We begin with the raw amino-acid sequence, 329 residues long: Calponin-3 (329 aa).

Lysine 23 is subject to N6-acetyllysine. The 105-residue stretch at 26–130 (HQAEEDLRNW…TLVALAGLAK (105 aa)) folds into the Calponin-homology (CH) domain. Lysine 158 carries the post-translational modification N6-methyllysine. 3 Calponin-like repeats span residues 164 to 189 (IGLQMGTNKCASQAGMTAYGTRRHLY), 204 to 229 (ISLQMGTNKGASQAGMLAPGTRRDIY), and 243 to 268 (ISLQMGTNKVASQKGMSVYGLGRQVY). The disordered stretch occupies residues 279-329 (PVIHNGSQGTGTNGSEISDSDYQAEYPDEYHGEYQDDYPRDYQYSDQGIDY). The segment covering 306 to 318 (DEYHGEYQDDYPR) has biased composition (basic and acidic residues). Serine 323 bears the Phosphoserine mark.

The protein belongs to the calponin family. Expressed in both non-smooth muscle tissues as well as smooth muscle tissues.

Functionally, thin filament-associated protein that is implicated in the regulation and modulation of smooth muscle contraction. It is capable of binding to actin, calmodulin and tropomyosin. The interaction of calponin with actin inhibits the actomyosin Mg-ATPase activity. The polypeptide is Calponin-3 (CNN3) (Homo sapiens (Human)).